We begin with the raw amino-acid sequence, 285 residues long: Ribosomal RNA small subunit methyltransferase A (285 aa).

Residues asparagine 21, leucine 23, glycine 48, glutamate 69, aspartate 94, and asparagine 127 each coordinate S-adenosyl-L-methionine.

The protein belongs to the class I-like SAM-binding methyltransferase superfamily. rRNA adenine N(6)-methyltransferase family. RsmA subfamily.

It is found in the cytoplasm. It carries out the reaction adenosine(1518)/adenosine(1519) in 16S rRNA + 4 S-adenosyl-L-methionine = N(6)-dimethyladenosine(1518)/N(6)-dimethyladenosine(1519) in 16S rRNA + 4 S-adenosyl-L-homocysteine + 4 H(+). Specifically dimethylates two adjacent adenosines (A1518 and A1519) in the loop of a conserved hairpin near the 3'-end of 16S rRNA in the 30S particle. May play a critical role in biogenesis of 30S subunits. This Koribacter versatilis (strain Ellin345) protein is Ribosomal RNA small subunit methyltransferase A.